A 131-amino-acid chain; its full sequence is Ribosome-binding factor A (131 aa).

This sequence belongs to the RbfA family. In terms of assembly, monomer. Binds 30S ribosomal subunits, but not 50S ribosomal subunits or 70S ribosomes.

It is found in the cytoplasm. Functionally, one of several proteins that assist in the late maturation steps of the functional core of the 30S ribosomal subunit. Associates with free 30S ribosomal subunits (but not with 30S subunits that are part of 70S ribosomes or polysomes). Required for efficient processing of 16S rRNA. May interact with the 5'-terminal helix region of 16S rRNA. This is Ribosome-binding factor A from Pseudomonas fluorescens (strain SBW25).